The chain runs to 87 residues: Serine protease inhibitor Kazal-type 12 (87 aa).

The signal sequence occupies residues 1 to 22 (MKPAGAFLLLISLACLFLSVDA). Positions 26 to 87 (GGFQAFCSNY…KLGFKHEGKC (62 aa)) constitute a Kazal-like domain. 3 cysteine pairs are disulfide-bonded: C32/C68, C46/C65, and C54/C87.

In terms of tissue distribution, expressed in epydiymis, in the caput.

The protein localises to the secreted. Functionally, inhibits trypsin. In Mus musculus (Mouse), this protein is Serine protease inhibitor Kazal-type 12 (Spink12).